Here is a 633-residue protein sequence, read N- to C-terminus: Probable extracellular metalloproteinase 5 (633 aa).

The signal sequence occupies residues 1–20; sequence MHGLLLAAAGLLSLPLHVLA. Positions 21–244 are excised as a propeptide; sequence HPQPSTNLAG…VHNVVDYVSH (224 aa). N-linked (GlcNAc...) asparagine glycosylation occurs at Asn-285. His-428 serves as a coordination point for Zn(2+). Glu-429 is an active-site residue. His-432 contacts Zn(2+). N-linked (GlcNAc...) asparagine glycans are attached at residues Asn-592 and Asn-621.

It belongs to the peptidase M36 family. It depends on Zn(2+) as a cofactor.

It localises to the secreted. Its function is as follows. Secreted metalloproteinase probably acting as a virulence factor. The chain is Probable extracellular metalloproteinase 5 (MEP5) from Trichophyton verrucosum (strain HKI 0517).